The following is a 281-amino-acid chain: Apolipoprotein Eb (281 aa).

The signal sequence occupies residues 1–18 (MRSLVVFFALAVLTGCQA). Positions 19–24 (RSLFQA) are excised as a propeptide. The interval 34–66 (MVDRFWQYVSELNTQTDGMVQNIKGSQLSRELD) is 3 X approximate tandem repeats. Repeat copies occupy residues 67–88 (TLIT…TQMT), 89–110 (PYAS…GKLQ), 111–132 (TDMT…TMME), 133–154 (QNAD…KRLN), 155–176 (KDTE…SRAS), 177–199 (QNAD…GATQ), 200–227 (KLGA…GALK), 228–249 (EKLE…DELT), and 254–281 (PYSQ…PTQA). A 9 X 22 AA approximate tandem repeats region spans residues 67–281 (TLITDTMAEL…EATAALPTQA (215 aa)).

It belongs to the apolipoprotein A1/A4/E family. Homotetramer.

The protein localises to the secreted. It is found in the extracellular space. The protein resides in the extracellular matrix. Its function is as follows. APOE is an apolipoprotein, a protein associating with lipid particles, that mainly functions in lipoprotein-mediated lipid transport between organs via the plasma and interstitial fluids. APOE is a core component of plasma lipoproteins and is involved in their production, conversion and clearance. Apolipoproteins are amphipathic molecules that interact both with lipids of the lipoprotein particle core and the aqueous environment of the plasma. The protein is Apolipoprotein Eb (apoeb) of Danio rerio (Zebrafish).